The primary structure comprises 166 residues: MVYIDPKHLELEDRVVAINRVTKVVKGGRRLRFAALVVVGDKNGHVGFGTGKAQEVPEAIRKAIEDAKKNLVEVPMVGSTIPHEVIGVFGGGRILMKPAVEGSGVAAGGPVRAVLELAGVADITSKSLGSNTPINVVRATVEGLKQLKRAEEVAALRGKSVEEIIG.

An S5 DRBM domain is found at 11–74 (LEDRVVAINR…EDAKKNLVEV (64 aa)).

It belongs to the universal ribosomal protein uS5 family. In terms of assembly, part of the 30S ribosomal subunit. Contacts proteins S4 and S8.

In terms of biological role, with S4 and S12 plays an important role in translational accuracy. Its function is as follows. Located at the back of the 30S subunit body where it stabilizes the conformation of the head with respect to the body. The protein is Small ribosomal subunit protein uS5 of Enterococcus faecalis (strain ATCC 700802 / V583).